We begin with the raw amino-acid sequence, 151 residues long: Nucleoside diphosphate kinase (151 aa).

The ATP site is built by lysine 10, phenylalanine 58, arginine 86, threonine 92, arginine 103, and asparagine 113. Residue histidine 116 is the Pros-phosphohistidine intermediate of the active site.

This sequence belongs to the NDK family. Homotetramer. Requires Mg(2+) as cofactor.

The protein resides in the cytoplasm. It catalyses the reaction dZDP + ATP = dZTP + ADP. The enzyme catalyses a 2'-deoxyribonucleoside 5'-diphosphate + ATP = a 2'-deoxyribonucleoside 5'-triphosphate + ADP. The catalysed reaction is a ribonucleoside 5'-diphosphate + ATP = a ribonucleoside 5'-triphosphate + ADP. It participates in purine metabolism. Functionally, major role in the synthesis of nucleoside triphosphates other than ATP. The ATP gamma phosphate is transferred to the NDP beta phosphate via a ping-pong mechanism, using a phosphorylated active-site intermediate. In terms of biological role, (Microbial infection) Catalyzes the phosphorylation of dZDP to dZTP, when the bacterium is infected by a phage that produces the substrate for the synthesis of dZTP (2- amino-2'-deoxyadenosine 5'-triphosphate), which is then used by the phage as a DNA polymerase substrate. The sequence is that of Nucleoside diphosphate kinase from Synechococcus sp. (strain CC9902).